The chain runs to 516 residues: Cytochrome P450 1A2 (516 aa).

S69 carries an O-linked (GlcNAc) serine glycan. F226 provides a ligand contact to substrate. C458 lines the heme pocket.

The protein belongs to the cytochrome P450 family. In terms of assembly, interacts with PGRMC1; the interaction requires PGRMC1 homodimerization. The cofactor is heme.

It is found in the endoplasmic reticulum membrane. It localises to the microsome membrane. It catalyses the reaction an organic molecule + reduced [NADPH--hemoprotein reductase] + O2 = an alcohol + oxidized [NADPH--hemoprotein reductase] + H2O + H(+). The enzyme catalyses 17beta-estradiol + reduced [NADPH--hemoprotein reductase] + O2 = 2-hydroxy-17beta-estradiol + oxidized [NADPH--hemoprotein reductase] + H2O + H(+). The catalysed reaction is 17beta-estradiol + reduced [NADPH--hemoprotein reductase] + O2 = 4-hydroxy-17beta-estradiol + oxidized [NADPH--hemoprotein reductase] + H2O + H(+). It carries out the reaction estrone + reduced [NADPH--hemoprotein reductase] + O2 = 2-hydroxyestrone + oxidized [NADPH--hemoprotein reductase] + H2O + H(+). It catalyses the reaction estrone + reduced [NADPH--hemoprotein reductase] + O2 = 4-hydroxyestrone + oxidized [NADPH--hemoprotein reductase] + H2O + H(+). The enzyme catalyses cholesterol + reduced [NADPH--hemoprotein reductase] + O2 = 25-hydroxycholesterol + oxidized [NADPH--hemoprotein reductase] + H2O + H(+). The catalysed reaction is all-trans-retinol + reduced [NADPH--hemoprotein reductase] + O2 = all-trans-retinal + oxidized [NADPH--hemoprotein reductase] + 2 H2O + H(+). It carries out the reaction all-trans-retinal + reduced [NADPH--hemoprotein reductase] + O2 = all-trans-retinoate + oxidized [NADPH--hemoprotein reductase] + H2O + 2 H(+). It catalyses the reaction (5Z,8Z,11Z,14Z)-eicosatetraenoate + reduced [NADPH--hemoprotein reductase] + O2 = (14R,15S)-epoxy-(5Z,8Z,11Z)-eicosatrienoate + oxidized [NADPH--hemoprotein reductase] + H2O + H(+). The enzyme catalyses (5Z,8Z,11Z,14Z)-eicosatetraenoate + reduced [NADPH--hemoprotein reductase] + O2 = (14S,15R)-epoxy-(5Z,8Z,11Z)-eicosatrienoate + oxidized [NADPH--hemoprotein reductase] + H2O + H(+). The catalysed reaction is (5Z,8Z,11Z,14Z,17Z)-eicosapentaenoate + reduced [NADPH--hemoprotein reductase] + O2 = (17R,18S)-epoxy-(5Z,8Z,11Z,14Z)-eicosatetraenoate + oxidized [NADPH--hemoprotein reductase] + H2O + H(+). It carries out the reaction (4Z,7Z,10Z,13Z,16Z,19Z)-docosahexaenoate + reduced [NADPH--hemoprotein reductase] + O2 = (19R,20S)-epoxy-(4Z,7Z,10Z,13Z,16Z)-docosapentaenoate + oxidized [NADPH--hemoprotein reductase] + H2O + H(+). It catalyses the reaction (5S)-hydroperoxy-(6E,8Z,11Z,14Z)-eicosatetraenoate = 5-oxo-(6E,8Z,11Z,14Z)-eicosatetraenoate + H2O. The enzyme catalyses (12S)-hydroperoxy-(5Z,8Z,10E,14Z)-eicosatetraenoate = 12-oxo-(5Z,8Z,10E,14Z)-eicosatetraenoate + H2O. The catalysed reaction is (15S)-hydroperoxy-(5Z,8Z,11Z,13E)-eicosatetraenoate = 15-oxo-(5Z,8Z,11Z,13E)-eicosatetraenoate + H2O. It carries out the reaction (13S)-hydroperoxy-(9Z,11E)-octadecadienoate = 13-oxo-(9Z,11E)-octadecadienoate + H2O. It catalyses the reaction (5Z,8Z,11Z,14Z)-eicosatetraenoate + reduced [NADPH--hemoprotein reductase] + O2 = 13-hydroxy-(5Z,8Z,11Z,14Z)-eicosatetraenoate + oxidized [NADPH--hemoprotein reductase] + H2O + H(+). The enzyme catalyses (5Z,8Z,11Z,14Z)-eicosatetraenoate + reduced [NADPH--hemoprotein reductase] + O2 = 19-hydroxy-(5Z,8Z,11Z,14Z)-eicosatetraenoate + oxidized [NADPH--hemoprotein reductase] + H2O + H(+). The catalysed reaction is (9Z,12Z)-octadecadienoate + reduced [NADPH--hemoprotein reductase] + O2 = 11-hydroxy-(9Z,12Z)-octadecadienoate + oxidized [NADPH--hemoprotein reductase] + H2O + H(+). It functions in the pathway cofactor metabolism; retinol metabolism. It participates in steroid metabolism; cholesterol metabolism. The protein operates within lipid metabolism; arachidonate metabolism. A cytochrome P450 monooxygenase involved in the metabolism of various endogenous substrates, including fatty acids, steroid hormones and vitamins. Mechanistically, uses molecular oxygen inserting one oxygen atom into a substrate, and reducing the second into a water molecule, with two electrons provided by NADPH via cytochrome P450 reductase (NADPH--hemoprotein reductase). Catalyzes the hydroxylation of carbon-hydrogen bonds. Exhibits high catalytic activity for the formation of hydroxyestrogens from estrone (E1) and 17beta-estradiol (E2), namely 2-hydroxy E1 and E2. Metabolizes cholesterol toward 25-hydroxycholesterol, a physiological regulator of cellular cholesterol homeostasis. May act as a major enzyme for all-trans retinoic acid biosynthesis in the liver. Catalyzes two successive oxidative transformation of all-trans retinol to all-trans retinal and then to the active form all-trans retinoic acid. Primarily catalyzes stereoselective epoxidation of the last double bond of polyunsaturated fatty acids (PUFA), displaying a strong preference for the (R,S) stereoisomer. Catalyzes bisallylic hydroxylation and omega-1 hydroxylation of PUFA. May also participate in eicosanoids metabolism by converting hydroperoxide species into oxo metabolites (lipoxygenase-like reaction, NADPH-independent). Plays a role in the oxidative metabolism of xenobiotics. Catalyzes the N-hydroxylation of heterocyclic amines and the O-deethylation of phenacetin. Metabolizes caffeine via N3-demethylation. The chain is Cytochrome P450 1A2 (CYP1A2) from Macaca fuscata fuscata (Japanese macaque).